A 122-amino-acid chain; its full sequence is NADH-quinone oxidoreductase subunit A (122 aa).

The next 3 membrane-spanning stretches (helical) occupy residues 10–30 (MIVL…LTLG), 66–86 (IFAL…PWAV), and 91–111 (LGLF…VGLA).

The protein belongs to the complex I subunit 3 family. NDH-1 is composed of 14 different subunits. Subunits NuoA, H, J, K, L, M, N constitute the membrane sector of the complex.

The protein localises to the cell membrane. The enzyme catalyses a quinone + NADH + 5 H(+)(in) = a quinol + NAD(+) + 4 H(+)(out). In terms of biological role, NDH-1 shuttles electrons from NADH, via FMN and iron-sulfur (Fe-S) centers, to quinones in the respiratory chain. The immediate electron acceptor for the enzyme in this species is believed to be a menaquinone. Couples the redox reaction to proton translocation (for every two electrons transferred, four hydrogen ions are translocated across the cytoplasmic membrane), and thus conserves the redox energy in a proton gradient. The protein is NADH-quinone oxidoreductase subunit A of Bacillus anthracis.